The chain runs to 643 residues: Threonine--tRNA ligase 1 (643 aa).

In terms of domain architecture, TGS spans D3–T64. The catalytic stretch occupies residues D245–P542. Residues C338, H389, and H519 each coordinate Zn(2+).

This sequence belongs to the class-II aminoacyl-tRNA synthetase family. In terms of assembly, homodimer. It depends on Zn(2+) as a cofactor.

The protein resides in the cytoplasm. The catalysed reaction is tRNA(Thr) + L-threonine + ATP = L-threonyl-tRNA(Thr) + AMP + diphosphate + H(+). Its function is as follows. Catalyzes the attachment of threonine to tRNA(Thr) in a two-step reaction: L-threonine is first activated by ATP to form Thr-AMP and then transferred to the acceptor end of tRNA(Thr). Also edits incorrectly charged L-seryl-tRNA(Thr). The protein is Threonine--tRNA ligase 1 (thrS) of Bacillus subtilis (strain 168).